Consider the following 206-residue polypeptide: MNKDTDNVEVNIVYKNRTISVPINITMSICALTALLKSYSITGSYHGYNHNYEYHHYHGYNHYNGYNYGKNNKGKIRVGVVSDHKPPFVLTKFPNEMLLLNFRIKEGDRFYVIFEDDYGIPNTHAHDIHESYKQYEPYEPYKSQKNIYIKTLKRAIIADNHRMVEYILDKELVDLHSNKKLYEKCIKLSKIHSRTYIQNLLEVVAL.

The chain crosses the membrane as a helical span at residues Val21 to Gly43.

It localises to the membrane. This is an uncharacterized protein from Acanthamoeba polyphaga (Amoeba).